The chain runs to 113 residues: Iron-sulfur cluster insertion protein ErpA (113 aa).

Iron-sulfur cluster-binding residues include Cys41, Cys105, and Cys107.

It belongs to the HesB/IscA family. In terms of assembly, homodimer. The cofactor is iron-sulfur cluster.

Required for insertion of 4Fe-4S clusters for at least IspG. The sequence is that of Iron-sulfur cluster insertion protein ErpA from Mannheimia succiniciproducens (strain KCTC 0769BP / MBEL55E).